Reading from the N-terminus, the 698-residue chain is Gametogenetin-binding protein 2 (698 aa).

The tract at residues 555–575 is disordered; the sequence is CMADPGNRETSGNTTHTEFHR.

Its subcellular location is the cytoplasm. May be involved in spermatogenesis. In Gallus gallus (Chicken), this protein is Gametogenetin-binding protein 2 (GGNBP2).